The sequence spans 212 residues: Uridine kinase (212 aa).

An ATP-binding site is contributed by 13–20 (GGSGSGKT).

The protein belongs to the uridine kinase family.

It is found in the cytoplasm. The enzyme catalyses uridine + ATP = UMP + ADP + H(+). The catalysed reaction is cytidine + ATP = CMP + ADP + H(+). It participates in pyrimidine metabolism; CTP biosynthesis via salvage pathway; CTP from cytidine: step 1/3. It functions in the pathway pyrimidine metabolism; UMP biosynthesis via salvage pathway; UMP from uridine: step 1/1. The polypeptide is Uridine kinase (Bacillus cereus (strain ATCC 10987 / NRS 248)).